The primary structure comprises 710 residues: Polyribonucleotide nucleotidyltransferase (710 aa).

Mg(2+)-binding residues include Asp-491 and Asp-497. In terms of domain architecture, KH spans 558–618 (PRIYKIQVKP…SAAQKAIEII (61 aa)). An S1 motif domain is found at 628–696 (GRIYMGKVTR…ELGRVRLSRK (69 aa)).

The protein belongs to the polyribonucleotide nucleotidyltransferase family. Mg(2+) is required as a cofactor.

The protein localises to the cytoplasm. It carries out the reaction RNA(n+1) + phosphate = RNA(n) + a ribonucleoside 5'-diphosphate. Its function is as follows. Involved in mRNA degradation. Catalyzes the phosphorolysis of single-stranded polyribonucleotides processively in the 3'- to 5'-direction. The polypeptide is Polyribonucleotide nucleotidyltransferase (Thermodesulfovibrio yellowstonii (strain ATCC 51303 / DSM 11347 / YP87)).